Here is a 284-residue protein sequence, read N- to C-terminus: Elongation factor Ts (284 aa).

Residues 80–83 (TDFV) form an involved in Mg(2+) ion dislocation from EF-Tu region.

It belongs to the EF-Ts family.

It is found in the cytoplasm. Functionally, associates with the EF-Tu.GDP complex and induces the exchange of GDP to GTP. It remains bound to the aminoacyl-tRNA.EF-Tu.GTP complex up to the GTP hydrolysis stage on the ribosome. This chain is Elongation factor Ts, found in Photobacterium profundum (strain SS9).